The primary structure comprises 162 residues: 2-C-methyl-D-erythritol 2,4-cyclodiphosphate synthase (162 aa).

Residues aspartate 12 and histidine 14 each contribute to the a divalent metal cation site. 4-CDP-2-C-methyl-D-erythritol 2-phosphate contacts are provided by residues 12-14 and 38-39; these read DVH and HS. Histidine 46 serves as a coordination point for a divalent metal cation. 4-CDP-2-C-methyl-D-erythritol 2-phosphate contacts are provided by residues 60–62, 65–69, and arginine 146; these read DIG and FPDTD.

It belongs to the IspF family. Homotrimer. A divalent metal cation serves as cofactor.

The enzyme catalyses 4-CDP-2-C-methyl-D-erythritol 2-phosphate = 2-C-methyl-D-erythritol 2,4-cyclic diphosphate + CMP. Its pathway is isoprenoid biosynthesis; isopentenyl diphosphate biosynthesis via DXP pathway; isopentenyl diphosphate from 1-deoxy-D-xylulose 5-phosphate: step 4/6. In terms of biological role, involved in the biosynthesis of isopentenyl diphosphate (IPP) and dimethylallyl diphosphate (DMAPP), two major building blocks of isoprenoid compounds. Catalyzes the conversion of 4-diphosphocytidyl-2-C-methyl-D-erythritol 2-phosphate (CDP-ME2P) to 2-C-methyl-D-erythritol 2,4-cyclodiphosphate (ME-CPP) with a corresponding release of cytidine 5-monophosphate (CMP). In Bordetella petrii (strain ATCC BAA-461 / DSM 12804 / CCUG 43448), this protein is 2-C-methyl-D-erythritol 2,4-cyclodiphosphate synthase.